A 613-amino-acid chain; its full sequence is MMQVLLVTICLAVFPYQGSSIILESGNVNDYEIVYPQKVTALPIEAILQPEQKYEDAMQYEFEVNGEPVVLHLEKNKNLFTKDYSETHYSPDGREITTKPLIEDHCYYHGRIQNDAHSTASISACNGLKGHFKLQGETYLIEPLKIPDSEAHAVYKYENIEKEDEALKMCGVKHTNWESDEPIKEASQLFATSEQHRFRERYIEFFIVVDQRMYNKHNNDSAAIRTWIFEMLNTVNEIYLPWNIHVPLVGLEFWTQGDLINVVSSADKTLDSFGEWRRRDLLNRKAHDNAHLITAMHFDAQTLGLAYTGSMCHPKYSTGVFQDSSEINIFVAITLAHELGHNLGISHDVPSCTCQTKACIMSPYLSDQPTKLFSNCSEIQYERFLTQRNPKCMINKPLRTDIISPPVCGNGLLEREEECDCGSPENCRDPCCDAASCKLHSWVECESGECCDQCRFKRAGTLCRPARDDCDMAESCSGHSADCPIDGFHANGQPCSHNLGYCYNGKCPLTLYQCRAFLGKDVVGVQESCFQYNRLGNTYAYCRKENGRKIPCAPKDEKCGRLYCSYKSFGDYISCLPCYRANEEDKGMVDEGTKCGEGKVCSNGYCVDLNVAY.

The signal sequence occupies residues M1–S20. Positions I21–E194 are excised as a propeptide. The residue at position 195 (Q195) is a Pyrrolidone carboxylic acid. Residues R201–P397 form the Peptidase M12B domain. E204 contributes to the Ca(2+) binding site. N-linked (GlcNAc...) asparagine glycosylation is present at N219. D288 contacts Ca(2+). 3 cysteine pairs are disulfide-bonded: C312-C392, C352-C376, and C354-C359. H337 contacts Zn(2+). E338 is an active-site residue. Zn(2+) is bound by residues H341 and H347. A glycan (N-linked (GlcNAc...) asparagine) is linked at N375. Ca(2+) is bound by residues C392, N395, V407, N410, L412, E414, E417, and D420. One can recognise a Disintegrin domain in the interval P405 to N491. Disulfide bonds link C408–C437, C419–C432, C421–C427, C431–C454, C445–C451, C450–C476, C463–C483, C470–C502, C495–C507, C514–C564, C529–C575, C542–C552, C559–C601, and C595–C606. The D/ECD-tripeptide signature appears at D469–D471.

It belongs to the venom metalloproteinase (M12B) family. P-III subfamily. P-IIIa sub-subfamily. Monomer. It depends on Zn(2+) as a cofactor. Expressed by the venom gland.

Its subcellular location is the secreted. Functionally, snake venom zinc metalloprotease that possesses high hemorrhagic activity. It inhibits collagen-induced platelet aggregation and activates prothrombin (F2). The chain is Zinc metalloproteinase-disintegrin-like EoVMP2 (Svmp3-Eoc22) from Echis ocellatus (Ocellated saw-scaled viper).